Reading from the N-terminus, the 529-residue chain is MSVKWTSVILLIQLSFYFSSGSCGKVLVWAAEYSHWMNMKTILEELVQRGHEVTVLASSASILFDPNNSSALKIEVFPTSLTKTEFENISMQEVKRWIELPKDTFWLYFSQMQEIMWRFGDIIRNFCKDVVSNKKLMKKLQESRFDVVFADPIFPCSELLAELFNIPLVYSLRFTPGYIFEKHCGGFLFPPSYVPVVMSELSDQMTFMERVKNMIYMLSFDFYFQMYDMKKWDQFYSEVLGRPTTLSETMGKADIWLIRNSWNFQFPHPLLPNVDFVGGLHCKPAKPLPKEMEEFVQSSGENGVVVFSLGSMVTNMEEERANVIASALAQIPQKVLWRFDGKKPDTLGLNTRLYKWIPQNDLLGHPKTRAFITHGGANGIYEAIYHGVPMVGIPLFADQPDNIAHMKTKGAAVRLDFDTMSSTDLANRLKTVINDPLYKENVMKLSRIQHDQPVKPLDRAVFWIEFVMRHKGAKHLRPAAHDLTWFQYHSLDVIGFLLACVATVIFVIMKCCLFCFWKFARKGKKGKSD.

Residues 1–21 (MSVKWTSVILLIQLSFYFSSG) form the signal peptide. Asn67, Asn68, and Asn88 each carry an N-linked (GlcNAc...) asparagine glycan. A helical membrane pass occupies residues 494 to 514 (IGFLLACVATVIFVIMKCCLF).

It belongs to the UDP-glycosyltransferase family.

The protein localises to the microsome membrane. Its subcellular location is the endoplasmic reticulum membrane. The catalysed reaction is glucuronate acceptor + UDP-alpha-D-glucuronate = acceptor beta-D-glucuronoside + UDP + H(+). Its function is as follows. UDPGT is of major importance in the conjugation and subsequent elimination of potentially toxic xenobiotics and endogenous compounds. This isozyme is active on C18, C19, and C21 steroids, bile acids, and several xenobiotics including eugenol, 1-naphthol, and p-nitrophenol. The protein is UDP-glucuronosyltransferase 2B9 (UGT2B9) of Macaca fascicularis (Crab-eating macaque).